Consider the following 66-residue polypeptide: SPbeta prophage-derived uncharacterized protein YosK (66 aa).

The polypeptide is SPbeta prophage-derived uncharacterized protein YosK (yosK) (Bacillus subtilis (strain 168)).